A 216-amino-acid chain; its full sequence is Phosphatidylserine decarboxylase proenzyme (216 aa).

The active-site Schiff-base intermediate with substrate; via pyruvic acid is Ser-185. Ser-185 is modified (pyruvic acid (Ser); by autocatalysis).

The protein belongs to the phosphatidylserine decarboxylase family. PSD-A subfamily. As to quaternary structure, heterodimer of a large membrane-associated beta subunit and a small pyruvoyl-containing alpha subunit. Requires pyruvate as cofactor. Post-translationally, is synthesized initially as an inactive proenzyme. Formation of the active enzyme involves a self-maturation process in which the active site pyruvoyl group is generated from an internal serine residue via an autocatalytic post-translational modification. Two non-identical subunits are generated from the proenzyme in this reaction, and the pyruvate is formed at the N-terminus of the alpha chain, which is derived from the carboxyl end of the proenzyme. The post-translation cleavage follows an unusual pathway, termed non-hydrolytic serinolysis, in which the side chain hydroxyl group of the serine supplies its oxygen atom to form the C-terminus of the beta chain, while the remainder of the serine residue undergoes an oxidative deamination to produce ammonia and the pyruvoyl prosthetic group on the alpha chain.

The protein resides in the cell membrane. It catalyses the reaction a 1,2-diacyl-sn-glycero-3-phospho-L-serine + H(+) = a 1,2-diacyl-sn-glycero-3-phosphoethanolamine + CO2. It participates in phospholipid metabolism; phosphatidylethanolamine biosynthesis; phosphatidylethanolamine from CDP-diacylglycerol: step 2/2. Its function is as follows. Catalyzes the formation of phosphatidylethanolamine (PtdEtn) from phosphatidylserine (PtdSer). The protein is Phosphatidylserine decarboxylase proenzyme of Nitrosomonas eutropha (strain DSM 101675 / C91 / Nm57).